The following is a 570-amino-acid chain: Sulfite reductase [NADPH] hemoprotein beta-component (570 aa).

4 residues coordinate [4Fe-4S] cluster: cysteine 434, cysteine 440, cysteine 479, and cysteine 483. A siroheme-binding site is contributed by cysteine 483.

It belongs to the nitrite and sulfite reductase 4Fe-4S domain family. In terms of assembly, alpha(8)-beta(8). The alpha component is a flavoprotein, the beta component is a hemoprotein. Requires siroheme as cofactor. [4Fe-4S] cluster serves as cofactor.

The enzyme catalyses hydrogen sulfide + 3 NADP(+) + 3 H2O = sulfite + 3 NADPH + 4 H(+). Its pathway is sulfur metabolism; hydrogen sulfide biosynthesis; hydrogen sulfide from sulfite (NADPH route): step 1/1. In terms of biological role, component of the sulfite reductase complex that catalyzes the 6-electron reduction of sulfite to sulfide. This is one of several activities required for the biosynthesis of L-cysteine from sulfate. This Salmonella typhi protein is Sulfite reductase [NADPH] hemoprotein beta-component.